The primary structure comprises 184 residues: ATP synthase subunit b, chloroplastic (184 aa).

The chain crosses the membrane as a helical span at residues 27–49; sequence LATNPINLSVVLGVLIFFGKGVL.

This sequence belongs to the ATPase B chain family. F-type ATPases have 2 components, F(1) - the catalytic core - and F(0) - the membrane proton channel. F(1) has five subunits: alpha(3), beta(3), gamma(1), delta(1), epsilon(1). F(0) has four main subunits: a(1), b(1), b'(1) and c(10-14). The alpha and beta chains form an alternating ring which encloses part of the gamma chain. F(1) is attached to F(0) by a central stalk formed by the gamma and epsilon chains, while a peripheral stalk is formed by the delta, b and b' chains.

It localises to the plastid. Its subcellular location is the chloroplast thylakoid membrane. F(1)F(0) ATP synthase produces ATP from ADP in the presence of a proton or sodium gradient. F-type ATPases consist of two structural domains, F(1) containing the extramembraneous catalytic core and F(0) containing the membrane proton channel, linked together by a central stalk and a peripheral stalk. During catalysis, ATP synthesis in the catalytic domain of F(1) is coupled via a rotary mechanism of the central stalk subunits to proton translocation. In terms of biological role, component of the F(0) channel, it forms part of the peripheral stalk, linking F(1) to F(0). The protein is ATP synthase subunit b, chloroplastic of Nicotiana tomentosiformis (Tobacco).